The sequence spans 161 residues: 2-C-methyl-D-erythritol 2,4-cyclodiphosphate synthase (161 aa).

A divalent metal cation-binding residues include Asp-8 and His-10. 4-CDP-2-C-methyl-D-erythritol 2-phosphate is bound by residues 8-10 (DLH) and 34-35 (HS). His-42 is an a divalent metal cation binding site. 4-CDP-2-C-methyl-D-erythritol 2-phosphate is bound by residues 56 to 58 (DIG) and Arg-142.

This sequence belongs to the IspF family. In terms of assembly, homotrimer. The cofactor is a divalent metal cation.

The enzyme catalyses 4-CDP-2-C-methyl-D-erythritol 2-phosphate = 2-C-methyl-D-erythritol 2,4-cyclic diphosphate + CMP. It functions in the pathway isoprenoid biosynthesis; isopentenyl diphosphate biosynthesis via DXP pathway; isopentenyl diphosphate from 1-deoxy-D-xylulose 5-phosphate: step 4/6. Functionally, involved in the biosynthesis of isopentenyl diphosphate (IPP) and dimethylallyl diphosphate (DMAPP), two major building blocks of isoprenoid compounds. Catalyzes the conversion of 4-diphosphocytidyl-2-C-methyl-D-erythritol 2-phosphate (CDP-ME2P) to 2-C-methyl-D-erythritol 2,4-cyclodiphosphate (ME-CPP) with a corresponding release of cytidine 5-monophosphate (CMP). This chain is 2-C-methyl-D-erythritol 2,4-cyclodiphosphate synthase, found in Treponema denticola (strain ATCC 35405 / DSM 14222 / CIP 103919 / JCM 8153 / KCTC 15104).